A 95-amino-acid chain; its full sequence is Small ribosomal subunit protein uS17 (95 aa).

Belongs to the universal ribosomal protein uS17 family. Part of the 30S ribosomal subunit.

Its function is as follows. One of the primary rRNA binding proteins, it binds specifically to the 5'-end of 16S ribosomal RNA. This is Small ribosomal subunit protein uS17 from Synechococcus sp. (strain CC9902).